The sequence spans 277 residues: 2-dehydro-3-deoxyphosphooctonate aldolase (277 aa).

It belongs to the KdsA family.

The protein resides in the cytoplasm. The enzyme catalyses D-arabinose 5-phosphate + phosphoenolpyruvate + H2O = 3-deoxy-alpha-D-manno-2-octulosonate-8-phosphate + phosphate. Its pathway is carbohydrate biosynthesis; 3-deoxy-D-manno-octulosonate biosynthesis; 3-deoxy-D-manno-octulosonate from D-ribulose 5-phosphate: step 2/3. The protein operates within bacterial outer membrane biogenesis; lipopolysaccharide biosynthesis. The chain is 2-dehydro-3-deoxyphosphooctonate aldolase from Brucella abortus (strain S19).